Here is a 63-residue protein sequence, read N- to C-terminus: Juvenile hormone esterase, isoform B (63 aa).

N-linked (GlcNAc...) asparagine glycosylation is present at Asn-20.

The protein belongs to the type-B carboxylesterase/lipase family. Fat body, the site of their biosynthesis, and the hemolymph where it is secreted.

The enzyme catalyses juvenile hormone I + H2O = juvenile hormone I carboxylate + methanol + H(+). It carries out the reaction juvenile hormone III + H2O = juvenile hormone III carboxylate + methanol + H(+). JH esterase plays a crucial role in the decrease of JH activity in lepidopteran insects, by hydrolyzing the methyl ester of JH. It is also involved in the transport of JH. This is Juvenile hormone esterase, isoform B from Trichoplusia ni (Cabbage looper).